Here is a 71-residue protein sequence, read N- to C-terminus: uncharacterized protein (71 aa).

Positions 1 to 23 (MTLLIILILKYLLCLENLKNISL) are cleaved as a signal peptide. 4 N-linked (GlcNAc...) asparagine glycosylation sites follow: N20, N28, N44, and N50.

It localises to the secreted. This is an uncharacterized protein from Dictyostelium discoideum (Social amoeba).